The primary structure comprises 124 residues: S-adenosylmethionine decarboxylase proenzyme (124 aa).

Serine 63 functions as the Schiff-base intermediate with substrate; via pyruvic acid in the catalytic mechanism. A Pyruvic acid (Ser); by autocatalysis modification is found at serine 63. Histidine 68 serves as the catalytic Proton acceptor; for processing activity. Cysteine 83 functions as the Proton donor; for catalytic activity in the catalytic mechanism.

This sequence belongs to the prokaryotic AdoMetDC family. Type 1 subfamily. As to quaternary structure, heterotetramer of two alpha and two beta chains arranged as a dimer of alpha/beta heterodimers. Requires pyruvate as cofactor. In terms of processing, is synthesized initially as an inactive proenzyme. Formation of the active enzyme involves a self-maturation process in which the active site pyruvoyl group is generated from an internal serine residue via an autocatalytic post-translational modification. Two non-identical subunits are generated from the proenzyme in this reaction, and the pyruvate is formed at the N-terminus of the alpha chain, which is derived from the carboxyl end of the proenzyme. The post-translation cleavage follows an unusual pathway, termed non-hydrolytic serinolysis, in which the side chain hydroxyl group of the serine supplies its oxygen atom to form the C-terminus of the beta chain, while the remainder of the serine residue undergoes an oxidative deamination to produce ammonia and the pyruvoyl group blocking the N-terminus of the alpha chain.

It carries out the reaction S-adenosyl-L-methionine + H(+) = S-adenosyl 3-(methylsulfanyl)propylamine + CO2. It participates in amine and polyamine biosynthesis; S-adenosylmethioninamine biosynthesis; S-adenosylmethioninamine from S-adenosyl-L-methionine: step 1/1. Catalyzes the decarboxylation of S-adenosylmethionine to S-adenosylmethioninamine (dcAdoMet), the propylamine donor required for the synthesis of the polyamines spermine and spermidine from the diamine putrescine. This chain is S-adenosylmethionine decarboxylase proenzyme, found in Geobacillus kaustophilus (strain HTA426).